The sequence spans 313 residues: MRRAPAFLSADEVQDHLRSSSLLIPPLEAALANFSKGPDGGVMQPVRTVVPVAKHRGFLGVMPAYSAAEDALTTKLVTFYEGHSNNAVPSHQASVLLFDPSNGSLLAVMDGNVITAKRTAAVSAIATKFLKPPGSDVLCILGAGVQAYSHYEIFTEQFSFKEVRMWNRTRENAEKFASSVQGDVRVCSSVQEAVTGADVIITVTMATEPILFGEWVKPGAHINAVGASRPDWRELDDELMKQAVLYVDSREAALKESGDVLLSGADIFAELGEVVSGAKPAYCEKTTVFKSLGMAVEDLVAAKLVYDSWSSGK.

R47 serves as a coordination point for 3,3',5-triiodo-L-thyronine. Residues S90, H91, R118, A143, V145, Q146, N167, R168, T169, N172, T204, M205, and V225 each coordinate NADPH. Position 256 (E256) interacts with 3,3',5-triiodo-L-thyronine. S291 lines the NADPH pocket.

This sequence belongs to the ornithine cyclodeaminase/mu-crystallin family. Homodimer. Binds the thyroid hormone triiodothyronine (T3); T3 binding inhibits enzymatic activity.

It localises to the cytoplasm. It catalyses the reaction L-pipecolate + NADP(+) = Delta(1)-piperideine-2-carboxylate + NADPH + H(+). The catalysed reaction is L-pipecolate + NAD(+) = Delta(1)-piperideine-2-carboxylate + NADH + H(+). It carries out the reaction L-proline + NADP(+) = 1-pyrroline-2-carboxylate + NADPH + H(+). The enzyme catalyses L-proline + NAD(+) = 1-pyrroline-2-carboxylate + NADH + H(+). It catalyses the reaction (3R)-1,4-thiomorpholine-3-carboxylate + NAD(+) = 3,4-dehydrothiomorpholine-3-carboxylate + NADH + 2 H(+). The catalysed reaction is (3R)-1,4-thiomorpholine-3-carboxylate + NADP(+) = 3,4-dehydrothiomorpholine-3-carboxylate + NADPH + 2 H(+). It carries out the reaction (S)-cystathionine ketimine + NADH + 2 H(+) = (3R,5S)-2,3,5,6,7-pentahydro-1,4-thiazepine-3,5-dicarboxylate + NAD(+). The enzyme catalyses (S)-cystathionine ketimine + NADPH + 2 H(+) = (3R,5S)-2,3,5,6,7-pentahydro-1,4-thiazepine-3,5-dicarboxylate + NADP(+). It catalyses the reaction (R)-lanthionine ketimine + NADPH + 2 H(+) = (3R,5R)-1,4-thiomorpholine-3,5-dicarboxylate + NADP(+). The catalysed reaction is Delta(2)-thiazoline-2-carboxylate + NADPH + 2 H(+) = L-thiazolidine-2-carboxylate + NADP(+). Its function is as follows. Catalyzes the NAD(P)H-dependent reduction of imine double bonds of a number of cyclic ketimine substrates, including sulfur-containing cyclic ketimines. Under physiological conditions, it efficiently catalyzes delta(1)-piperideine-2-carboxylate (P2C) and delta(1)-pyrroline-2-carboxylate (Pyr2C) reduction, suggesting a central role in lysine and glutamate metabolism. Additional substrates are delta(2)-thiazoline-2-carboxylate (T2C), 3,4-dehydrothiomorpholine-3-carboxylate (AECK), and (R)-lanthionine ketimine (LK) that is reduced at very low rate compared to other substrates. Also catalyzes the NAD(P)H-dependent reduction of (S)-cystathionine ketimine (CysK). This Rattus norvegicus (Rat) protein is Ketimine reductase mu-crystallin.